Consider the following 656-residue polypeptide: Sulfate transporter 1.3 (656 aa).

Residues 1 to 30 are disordered; that stretch reads MSARAHPVDDDGEISPVERSSPRQANTPYV. The Cytoplasmic portion of the chain corresponds to 1-94; that stretch reads MSARAHPVDD…GRKYNLKLFR (94 aa). A helical transmembrane segment spans residues 95–115; sequence GDLIAGLTIASLCIPQDIGYA. Residues 116–119 lie on the Extracellular side of the membrane; sequence KLAS. The helical transmembrane segment at 120-140 threads the bilayer; sequence LDPKYGLYSSFVPPLVYACMG. The Cytoplasmic segment spans residues 141–144; the sequence is SSKD. A helical membrane pass occupies residues 145 to 165; sequence IAIGPVAVVSLLLGTLLRAEI. At 166–176 the chain is on the extracellular side; that stretch reads DPNTNPNEYLR. The next 2 membrane-spanning stretches (helical) occupy residues 177-197 and 198-218; these read LAFT…FFRL and GFLI…GAAI. At 219-256 the chain is on the extracellular side; sequence TIALQQLKGFLGINKFTKKTDIIAVLSSVISSAHHGWN. The helical transmembrane segment at 257 to 277 threads the bilayer; the sequence is WQTILISASFLIFLLISKFIG. The Cytoplasmic portion of the chain corresponds to 278-283; the sequence is KRNKKL. A helical membrane pass occupies residues 284–304; sequence FWIPAIAPLVSVIISTFFVYI. At 305-342 the chain is on the extracellular side; the sequence is TRADKKGVQIVKHLDKGLNPSSLRLIYFSGDYLLKGFR. Residues 343–363 traverse the membrane as a helical segment; sequence IGVVSGMVALTEAVAIGRTFA. Residues 364–375 lie on the Cytoplasmic side of the membrane; it reads AMKDYQIDGNKE. A helical transmembrane segment spans residues 376–396; it reads MVALGAMNVIGSMTSCYVSTG. Topologically, residues 397-412 are extracellular; that stretch reads SFSRSAVNFMAGCQTA. The chain crosses the membrane as a helical span at residues 413 to 433; sequence VSNIIMSIVVLLTLLFLTPLF. At 434-441 the chain is on the cytoplasmic side; the sequence is KYTPNAIL. The helical transmembrane segment at 442–462 threads the bilayer; the sequence is AAIIINAVIPLVDVNATILIF. The Extracellular portion of the chain corresponds to 463-473; it reads KIDKLDFVACM. Residues 474–494 form a helical membrane-spanning segment; it reads GAFFGVIFVSVEIGLLIAVGI. Over 495 to 656 the chain is Cytoplasmic; sequence SFAKILLQVT…SCSPKLSDEV (162 aa). Residues 525–648 enclose the STAS domain; the sequence is QYPEATRIPG…LTVAEAVDSC (124 aa).

It belongs to the SLC26A/SulP transporter (TC 2.A.53) family. Expressed in the phloem of cotyledons, hypocotyls and roots.

It localises to the membrane. High-affinity H(+)/sulfate cotransporter that mediates the loading of sulfate into the sieve tube. Plays a central role in the regulation of sulfate assimilation. This Arabidopsis thaliana (Mouse-ear cress) protein is Sulfate transporter 1.3 (SULTR1;3).